Here is a 230-residue protein sequence, read N- to C-terminus: Glutathione S-transferase 2 (230 aa).

The GST N-terminal domain maps to 2-86; it reads AHFTLYSHAG…YLADKYDTDR (85 aa). Residues 93–230 enclose the GST C-terminal domain; the sequence is DDPEYYKLIQ…EELAKAKEQH (138 aa).

Belongs to the GST superfamily.

It carries out the reaction RX + glutathione = an S-substituted glutathione + a halide anion + H(+). Involved in the oxidative stress response and detoxification. This is Glutathione S-transferase 2 (gst2) from Schizosaccharomyces pombe (strain 972 / ATCC 24843) (Fission yeast).